A 304-amino-acid chain; its full sequence is Ribosomal RNA small subunit methyltransferase H (304 aa).

Residues 47–49 (GGH), Asp66, Phe93, Asp108, and Gln115 each bind S-adenosyl-L-methionine.

It belongs to the methyltransferase superfamily. RsmH family.

The protein localises to the cytoplasm. The enzyme catalyses cytidine(1402) in 16S rRNA + S-adenosyl-L-methionine = N(4)-methylcytidine(1402) in 16S rRNA + S-adenosyl-L-homocysteine + H(+). Specifically methylates the N4 position of cytidine in position 1402 (C1402) of 16S rRNA. The chain is Ribosomal RNA small subunit methyltransferase H from Prochlorococcus marinus (strain NATL1A).